Here is a 477-residue protein sequence, read N- to C-terminus: Bifunctional enzyme PyrF/PyrE (477 aa).

An OMP decarboxylase region spans residues 1–273 (MIFFDKLHQN…ITVRDVASCS (273 aa)). The active-site Proton donor is the lysine 96. Residues 274–477 (VWLPDVFTVK…DEQFLALTAE (204 aa)) form an orotate phosphoribosyltransferase region. Residues arginine 374, lysine 375, lysine 378, histidine 380, and 400-408 (DDILISGKS) contribute to the 5-phospho-alpha-D-ribose 1-diphosphate site.

The protein in the N-terminal section; belongs to the OMP decarboxylase family. Type 2 subfamily. In the C-terminal section; belongs to the purine/pyrimidine phosphoribosyltransferase family. The cofactor is Mg(2+).

It catalyses the reaction orotidine 5'-phosphate + H(+) = UMP + CO2. The catalysed reaction is orotidine 5'-phosphate + diphosphate = orotate + 5-phospho-alpha-D-ribose 1-diphosphate. The protein operates within pyrimidine metabolism; UMP biosynthesis via de novo pathway; UMP from orotate: step 1/2. Its pathway is pyrimidine metabolism; UMP biosynthesis via de novo pathway; UMP from orotate: step 2/2. In terms of biological role, catalyzes the transfer of a ribosyl phosphate group from 5-phosphoribose 1-diphosphate to orotate, leading to the formation of orotidine monophosphate (OMP). Its function is as follows. Catalyzes the decarboxylation of orotidine monophosphate (OMP) to uridine monophosphate (UMP). The polypeptide is Bifunctional enzyme PyrF/PyrE (pyrFE) (Nostoc sp. (strain PCC 7120 / SAG 25.82 / UTEX 2576)).